We begin with the raw amino-acid sequence, 214 residues long: Rac-like GTP-binding protein 3 (214 aa).

15 to 22 (GDGAVGKT) lines the GTP pocket. Residues 37 to 45 (YIPTVFDNF) carry the Effector region motif. GTP is bound by residues 62–66 (DTAGQ) and 120–123 (TKLD).

The protein belongs to the small GTPase superfamily. Rho family. May be palmitoylated.

The protein resides in the cytoplasm. Its subcellular location is the membrane. Inactive GDP-bound Rho GTPases reside in the cytosol, are found in a complex with Rho GDP-dissociation inhibitors (Rho GDIs), and are released from the GDI protein in order to translocate to membranes upon activation. This is Rac-like GTP-binding protein 3 (RAC3) from Oryza sativa subsp. japonica (Rice).